Here is a 400-residue protein sequence, read N- to C-terminus: Aspartate/prephenate aminotransferase (400 aa).

Residues glycine 39, tryptophan 125, and asparagine 175 each coordinate L-aspartate. N6-(pyridoxal phosphate)lysine is present on lysine 239. Arginine 375 is a binding site for L-aspartate.

This sequence belongs to the class-I pyridoxal-phosphate-dependent aminotransferase family. Homodimer. The cofactor is pyridoxal 5'-phosphate.

It localises to the cytoplasm. It catalyses the reaction L-aspartate + 2-oxoglutarate = oxaloacetate + L-glutamate. The enzyme catalyses L-arogenate + 2-oxoglutarate = prephenate + L-glutamate. Its function is as follows. Catalyzes the reversible conversion of aspartate and 2-oxoglutarate to glutamate and oxaloacetate. Can also transaminate prephenate in the presence of glutamate. Required for symbiotic nitrogen fixation. The sequence is that of Aspartate/prephenate aminotransferase from Rhizobium meliloti (strain 1021) (Ensifer meliloti).